Consider the following 357-residue polypeptide: Phosphoribosylformylglycinamidine cyclo-ligase (357 aa).

Belongs to the AIR synthase family.

Its subcellular location is the cytoplasm. It carries out the reaction 2-formamido-N(1)-(5-O-phospho-beta-D-ribosyl)acetamidine + ATP = 5-amino-1-(5-phospho-beta-D-ribosyl)imidazole + ADP + phosphate + H(+). Its pathway is purine metabolism; IMP biosynthesis via de novo pathway; 5-amino-1-(5-phospho-D-ribosyl)imidazole from N(2)-formyl-N(1)-(5-phospho-D-ribosyl)glycinamide: step 2/2. This is Phosphoribosylformylglycinamidine cyclo-ligase from Rhizobium etli (strain CIAT 652).